Consider the following 212-residue polypeptide: uncharacterized protein (212 aa).

A Toprim domain is found at 105-187 (NTIYLVEGDF…QVKVVQLKGK (83 aa)).

This is an uncharacterized protein from Mycoplasma pneumoniae (strain ATCC 29342 / M129 / Subtype 1) (Mycoplasmoides pneumoniae).